The primary structure comprises 1372 residues: DNA-directed RNA polymerase subunit beta' (1372 aa).

Zn(2+) contacts are provided by Cys-69, Cys-71, Cys-84, and Cys-87. 3 residues coordinate Mg(2+): Asp-460, Asp-462, and Asp-464. Cys-808, Cys-882, Cys-889, and Cys-892 together coordinate Zn(2+).

The protein belongs to the RNA polymerase beta' chain family. As to quaternary structure, the RNAP catalytic core consists of 2 alpha, 1 beta, 1 beta' and 1 omega subunit. When a sigma factor is associated with the core the holoenzyme is formed, which can initiate transcription. Mg(2+) serves as cofactor. It depends on Zn(2+) as a cofactor.

It carries out the reaction RNA(n) + a ribonucleoside 5'-triphosphate = RNA(n+1) + diphosphate. DNA-dependent RNA polymerase catalyzes the transcription of DNA into RNA using the four ribonucleoside triphosphates as substrates. This is DNA-directed RNA polymerase subunit beta' from Rickettsia prowazekii (strain Madrid E).